Reading from the N-terminus, the 301-residue chain is Ribosomal protein L11 methyltransferase (301 aa).

Residues Thr-146, Gly-167, Asp-189, and Asn-234 each contribute to the S-adenosyl-L-methionine site.

This sequence belongs to the methyltransferase superfamily. PrmA family.

Its subcellular location is the cytoplasm. The catalysed reaction is L-lysyl-[protein] + 3 S-adenosyl-L-methionine = N(6),N(6),N(6)-trimethyl-L-lysyl-[protein] + 3 S-adenosyl-L-homocysteine + 3 H(+). Methylates ribosomal protein L11. The polypeptide is Ribosomal protein L11 methyltransferase (Acinetobacter baumannii (strain SDF)).